An 854-amino-acid chain; its full sequence is Gamma-secretase-activating protein (854 aa).

The protein belongs to the GSAP family. Interacts with APP; specifically interacts with the CTF-alpha product of APP. Interacts with the gamma-secretase complex. Post-translationally, the protein is first synthesized as a holoprotein form of 98 kDa and rapidly processed into the gamma-secretase-activating protein 16 kDa C-terminal form, which constitutes the predominant form. As to expression, widely expressed.

The protein localises to the golgi apparatus. Its subcellular location is the trans-Golgi network. Regulator of gamma-secretase activity, which specifically activates the production of amyloid-beta protein (amyloid-beta protein 40 and amyloid-beta protein 42), without affecting the cleavage of other gamma-secretase targets such has Notch. The gamma-secretase complex is an endoprotease complex that catalyzes the intramembrane cleavage of integral membrane proteins such as Notch receptors and APP (amyloid-beta precursor protein). Specifically promotes the gamma-cleavage of APP CTF-alpha (also named APP-CTF) by the gamma-secretase complex to generate amyloid-beta, while it reduces the epsilon-cleavage of APP CTF-alpha, leading to a low production of AICD. The sequence is that of Gamma-secretase-activating protein (GSAP) from Homo sapiens (Human).